The primary structure comprises 407 residues: MQTTLKQQRASGRVSARQPFRSAAVARPRRSTVRVQASAAPLNDGLGFETMRDGIKVAAKETLLTPRFYTTDFDEMEQLFSKEINPNLDMEELNACLNEFRNDYNKVHFVRNETFKAAADKVTGETRRIFIEFLERSCTAEFSGFLLYKELARRMKASSPEVAEMFLLMSRDEARHAGFLNKALSDFNLALDLGFLTKNRTYTYFKPKFIIYATFLSEKIGYWRYITIYRHLQRNPDNQFYPLFEYFENWCQDENRHGDFLAACLKAKPELLNTFEAKLWSKFFCLSVYITMYLNDHQRTKFYESLGLNTRQFNQHVIIETNRATERLFPVVPDVEDPRFFEILNKMVDVNAKLVELSASSSPLAGLQKLPLLERMASYCLQLLFFKEKDVGSVDIAGSGASRNLAY.

Positions 1–10 (MQTTLKQQRA) are enriched in polar residues. A disordered region spans residues 1 to 28 (MQTTLKQQRASGRVSARQPFRSAAVARP).

The protein belongs to the AcsF family. The cofactor is Fe cation.

Its subcellular location is the plastid. It localises to the chloroplast thylakoid membrane. It carries out the reaction Mg-protoporphyrin IX 13-monomethyl ester + 3 NADPH + 3 O2 + 2 H(+) = 3,8-divinyl protochlorophyllide a + 3 NADP(+) + 5 H2O. It participates in porphyrin-containing compound metabolism; chlorophyll biosynthesis. Its function is as follows. Catalyzes the formation of the isocyclic ring in chlorophyll biosynthesis under oxygen- and copper-deficient conditions. Mediates the cyclase reaction, which results in the formation of divinylprotochlorophyllide (Pchlide) characteristic of all chlorophylls from magnesium-protoporphyrin IX 13-monomethyl ester (MgPMME). The chain is Magnesium-protoporphyrin IX monomethyl ester [oxidative] cyclase 1, chloroplastic (CRD1) from Chlamydomonas reinhardtii (Chlamydomonas smithii).